The following is a 371-amino-acid chain: Phosphatase IMPL1, chloroplastic (371 aa).

A chloroplast-targeting transit peptide spans 1 to 60; that stretch reads MGRSLIFSGNMSLRISHLPRSSLPLQNPISGRTVNRTFRYRCTRILSNSFKSTTRLQTKA. Residue Val61 is modified to N-acetylvaline. Glu148, Asp165, Leu167, and Asp168 together coordinate Mg(2+). Glu148 is a substrate binding site. Residues 167-170, 273-275, Glu292, and Asp299 each bind substrate; these read LDGT and GAA. Residue Asp299 coordinates Mg(2+).

It belongs to the inositol monophosphatase superfamily. Mg(2+) serves as cofactor. In terms of tissue distribution, ubiquitous. Expressed in pistil and seed endosperm.

It localises to the plastid. It is found in the chloroplast stroma. The enzyme catalyses a myo-inositol phosphate + H2O = myo-inositol + phosphate. Its pathway is polyol metabolism; myo-inositol biosynthesis; myo-inositol from D-glucose 6-phosphate: step 2/2. In terms of biological role, phosphatase acting preferentially on D-myoinositol 1-phosphate (D-Ins 1-P). This Arabidopsis thaliana (Mouse-ear cress) protein is Phosphatase IMPL1, chloroplastic (IMPL1).